The following is a 166-amino-acid chain: Urease accessory protein UreE (166 aa).

The protein belongs to the UreE family.

It is found in the cytoplasm. In terms of biological role, involved in urease metallocenter assembly. Binds nickel. Probably functions as a nickel donor during metallocenter assembly. This Azotobacter vinelandii (strain DJ / ATCC BAA-1303) protein is Urease accessory protein UreE.